The chain runs to 197 residues: Phosphoheptose isomerase (197 aa).

One can recognise an SIS domain in the interval 34–196; that stretch reads MVQCLLGGNK…DRTLFPQDEQ (163 aa). 49–51 is a substrate binding site; the sequence is NGG. Zn(2+) is bound by residues histidine 58 and glutamate 62. Substrate-binding positions include glutamate 62, 91-92, 117-119, serine 122, and glutamine 172; these read ND and STS. Residues glutamine 172 and histidine 180 each coordinate Zn(2+).

Belongs to the SIS family. GmhA subfamily. In terms of assembly, homotetramer. Zn(2+) serves as cofactor.

The protein resides in the cytoplasm. The enzyme catalyses 2 D-sedoheptulose 7-phosphate = D-glycero-alpha-D-manno-heptose 7-phosphate + D-glycero-beta-D-manno-heptose 7-phosphate. It participates in carbohydrate biosynthesis; D-glycero-D-manno-heptose 7-phosphate biosynthesis; D-glycero-alpha-D-manno-heptose 7-phosphate and D-glycero-beta-D-manno-heptose 7-phosphate from sedoheptulose 7-phosphate: step 1/1. Functionally, catalyzes the isomerization of sedoheptulose 7-phosphate in D-glycero-D-manno-heptose 7-phosphate. This Shewanella frigidimarina (strain NCIMB 400) protein is Phosphoheptose isomerase.